The primary structure comprises 464 residues: tRNA modification GTPase MnmE (464 aa).

Residues R27, E90, and K129 each coordinate (6S)-5-formyl-5,6,7,8-tetrahydrofolate. The TrmE-type G domain maps to 222 to 384 (GVTLVLAGSV…LYDRIRSFIA (163 aa)). GTP-binding positions include 232–237 (NVGKSS), 251–257 (SSYAGTT), and 276–279 (DTAG). S236 contributes to the Mg(2+) binding site. A K(+)-binding site is contributed by S251. A Mg(2+)-binding site is contributed by T257. K464 lines the (6S)-5-formyl-5,6,7,8-tetrahydrofolate pocket.

This sequence belongs to the TRAFAC class TrmE-Era-EngA-EngB-Septin-like GTPase superfamily. TrmE GTPase family. As to quaternary structure, homodimer. Heterotetramer of two MnmE and two MnmG subunits. Requires K(+) as cofactor.

The protein resides in the cytoplasm. In terms of biological role, exhibits a very high intrinsic GTPase hydrolysis rate. Involved in the addition of a carboxymethylaminomethyl (cmnm) group at the wobble position (U34) of certain tRNAs, forming tRNA-cmnm(5)s(2)U34. This chain is tRNA modification GTPase MnmE, found in Borrelia recurrentis (strain A1).